Reading from the N-terminus, the 77-residue chain is Epoxide hydrolase (77 aa).

In terms of assembly, monomer.

The catalysed reaction is an epoxide + H2O = an ethanediol. In terms of biological role, this enzyme acts on aliphatic epoxides. Its substrates include epichlorohydrin, epibromohydrin, epoxyoctane and styrene epoxide. The chain is Epoxide hydrolase from Pseudomonas sp. (strain AD1).